A 176-amino-acid chain; its full sequence is ATP synthase subunit delta (176 aa).

Belongs to the ATPase delta chain family. In terms of assembly, F-type ATPases have 2 components, F(1) - the catalytic core - and F(0) - the membrane proton channel. F(1) has five subunits: alpha(3), beta(3), gamma(1), delta(1), epsilon(1). F(0) has three main subunits: a(1), b(2) and c(10-14). The alpha and beta chains form an alternating ring which encloses part of the gamma chain. F(1) is attached to F(0) by a central stalk formed by the gamma and epsilon chains, while a peripheral stalk is formed by the delta and b chains.

It is found in the cell inner membrane. In terms of biological role, f(1)F(0) ATP synthase produces ATP from ADP in the presence of a proton or sodium gradient. F-type ATPases consist of two structural domains, F(1) containing the extramembraneous catalytic core and F(0) containing the membrane proton channel, linked together by a central stalk and a peripheral stalk. During catalysis, ATP synthesis in the catalytic domain of F(1) is coupled via a rotary mechanism of the central stalk subunits to proton translocation. This protein is part of the stalk that links CF(0) to CF(1). It either transmits conformational changes from CF(0) to CF(1) or is implicated in proton conduction. The chain is ATP synthase subunit delta from Campylobacter concisus (strain 13826).